The following is a 407-amino-acid chain: Chorismate synthase (407 aa).

The NADP(+) site is built by R40 and R46. FMN-binding positions include 138–140 (RAS) and 259–260 (QA). The span at 275–284 (RRGSRAHDEM) shows a compositional bias: basic and acidic residues. Positions 275-308 (RRGSRAHDEMYPGTDGVVRSTNRAGGLEGGMTNG) are disordered. FMN contacts are provided by residues G303, 318-322 (KPIST), and R344.

This sequence belongs to the chorismate synthase family. Homotetramer. FMNH2 serves as cofactor.

The enzyme catalyses 5-O-(1-carboxyvinyl)-3-phosphoshikimate = chorismate + phosphate. Its pathway is metabolic intermediate biosynthesis; chorismate biosynthesis; chorismate from D-erythrose 4-phosphate and phosphoenolpyruvate: step 7/7. Functionally, catalyzes the anti-1,4-elimination of the C-3 phosphate and the C-6 proR hydrogen from 5-enolpyruvylshikimate-3-phosphate (EPSP) to yield chorismate, which is the branch point compound that serves as the starting substrate for the three terminal pathways of aromatic amino acid biosynthesis. This reaction introduces a second double bond into the aromatic ring system. The chain is Chorismate synthase from Mycobacterium marinum (strain ATCC BAA-535 / M).